A 278-amino-acid chain; its full sequence is Ribosomal RNA small subunit methyltransferase A (278 aa).

Asn-27, Leu-29, Gly-54, Glu-75, Asp-95, and Asn-118 together coordinate S-adenosyl-L-methionine.

Belongs to the class I-like SAM-binding methyltransferase superfamily. rRNA adenine N(6)-methyltransferase family. RsmA subfamily.

Its subcellular location is the cytoplasm. The enzyme catalyses adenosine(1518)/adenosine(1519) in 16S rRNA + 4 S-adenosyl-L-methionine = N(6)-dimethyladenosine(1518)/N(6)-dimethyladenosine(1519) in 16S rRNA + 4 S-adenosyl-L-homocysteine + 4 H(+). Functionally, specifically dimethylates two adjacent adenosines (A1518 and A1519) in the loop of a conserved hairpin near the 3'-end of 16S rRNA in the 30S particle. May play a critical role in biogenesis of 30S subunits. In Chlamydia abortus (strain DSM 27085 / S26/3) (Chlamydophila abortus), this protein is Ribosomal RNA small subunit methyltransferase A.